The chain runs to 2462 residues: Piezo-type mechanosensitive ion channel homolog (2462 aa).

Transmembrane regions (helical) follow at residues 5–25 (LVGF…WSVI), 27–47 (FLDL…GYRF), 57–77 (IFIF…IWAA), 105–125 (TVMY…ADIY), 163–183 (AVQL…FFIG), 207–227 (LYIY…PINF), 248–268 (EGPD…LSYV), 325–345 (FFTY…FHFA), 347–367 (LCAF…PSLF), 374–394 (GLLL…NVAF), 404–424 (FGLG…FLYL), 467–487 (LIFL…IFFL), 502–522 (SLIL…IDLV), 554–574 (IALL…LFSF), 653–673 (VYLV…LLWI), 694–714 (AVLV…QLWL), 730–750 (APLL…QLYS), 792–812 (FYAS…GLVI), and 826–846 (SFLI…LWGM). The interval 927 to 947 (ASVSSSNGENPSSTDHASISM) is disordered. Over residues 928 to 939 (SVSSSNGENPSS) the composition is skewed to low complexity. A run of 8 helical transmembrane segments spans residues 1027–1047 (FWIE…ALLL), 1050–1070 (FALL…CVLL), 1078–1098 (LWPV…VATW), 1143–1160 (TLIS…KLRA), 1204–1224 (LYCY…TGTL), 1228–1248 (ILHL…LEIL), 1260–1280 (VYNF…VGNF), and 1310–1330 (SALV…MFSS). A coiled-coil region spans residues 1347-1400 (AIVREQEKKAARKTEQLQQIREAEEKKRQRNLQVEKMKSEMLNLRVQLHRMNSD). The disordered stretch occupies residues 1543 to 1583 (SDTNEQSSVDDEVYDEMESQKRKHTPFERSTSLQSDRSSDG). Acidic residues predominate over residues 1550-1559 (SVDDEVYDEM). Positions 1570-1583 (ERSTSLQSDRSSDG) are enriched in polar residues. The next 8 helical transmembrane spans lie at 1611 to 1631 (FIIA…AALF), 1647 to 1667 (VIML…QIII), 1916 to 1936 (YIFG…QSVI), 1956 to 1976 (FVII…IYLC), 1984 to 2004 (VYYL…AWSI), 2012 to 2032 (AGLA…LQAI), 2130 to 2150 (GICL…MYSS), and 2369 to 2389 (FLGD…FVLA).

The protein belongs to the PIEZO (TC 1.A.75) family.

It localises to the membrane. Its function is as follows. Pore-forming subunit of a mechanosensitive non-specific cation channel, that conducts both sodium and potassium ions. The chain is Piezo-type mechanosensitive ion channel homolog from Arabidopsis thaliana (Mouse-ear cress).